The following is a 129-amino-acid chain: Glycine cleavage system H protein (129 aa).

Residues 24–106 (SYTVGITEHA…YGEGWFFRVM (83 aa)) enclose the Lipoyl-binding domain. Lysine 65 bears the N6-lipoyllysine mark.

It belongs to the GcvH family. In terms of assembly, the glycine cleavage system is composed of four proteins: P, T, L and H. (R)-lipoate is required as a cofactor.

In terms of biological role, the glycine cleavage system catalyzes the degradation of glycine. The H protein shuttles the methylamine group of glycine from the P protein to the T protein. This Shewanella sp. (strain MR-7) protein is Glycine cleavage system H protein.